The following is a 420-amino-acid chain: Glycogen synthase kinase-3 beta (420 aa).

A compositionally biased stretch (polar residues) spans 1 to 24; the sequence is MSGRPRTTSFAESCKPVQQPSSFG. The segment at 1–50 is disordered; sequence MSGRPRTTSFAESCKPVQQPSSFGSMKVSRDKDGSKVTTVVATPGQGPDR. One can recognise a Protein kinase domain in the interval 56 to 340; that stretch reads YTDTKVIGNG…PLDACAHSFF (285 aa). Residues 62-70 and lysine 85 each bind ATP; that span reads IGNGSFGVV. The active-site Proton acceptor is aspartate 181. Residues 384–420 are disordered; it reads NQAAVSTTSNTTSTSDSNTGERGSTNNAASASASNSS. 2 stretches are compositionally biased toward low complexity: residues 389 to 401 and 409 to 420; these read STTS…SDSN and NNAASASASNSS.

Belongs to the protein kinase superfamily. CMGC Ser/Thr protein kinase family. GSK-3 subfamily. In terms of processing, phosphorylated. Activated by phosphorylation at Tyr-216.

Its subcellular location is the cytoplasm. It localises to the nucleus. It is found in the cell membrane. It carries out the reaction L-seryl-[tau protein] + ATP = O-phospho-L-seryl-[tau protein] + ADP + H(+). The catalysed reaction is L-threonyl-[tau protein] + ATP = O-phospho-L-threonyl-[tau protein] + ADP + H(+). Functionally, plays a role in the organization of the formation of the main body axis of developing embryo. Acts as an inhibitor of differentiation of primary neurons. Inhibits the ability of ectopically expressed NEUROD1 and other bHLH factors to promote early retinal cell differentiation. May participate in the Wnt signaling pathway. May regulate the circadian clock via phosphorylation of the major clock components. The polypeptide is Glycogen synthase kinase-3 beta (gsk3b) (Xenopus laevis (African clawed frog)).